The following is a 576-amino-acid chain: Putative SPbeta prophage-derived single-strand DNA-specific exonuclease YorK (576 aa).

At Tyr-473 the chain carries Phosphotyrosine.

This sequence belongs to the RecJ family.

Functionally, putative single-stranded-DNA-specific exonuclease. This Bacillus subtilis (strain 168) protein is Putative SPbeta prophage-derived single-strand DNA-specific exonuclease YorK (yorK).